The sequence spans 342 residues: Holliday junction branch migration complex subunit RuvB (342 aa).

Positions 1-179 are large ATPase domain (RuvB-L); it reads MTNILSPEKS…FGIPMRLNFY (179 aa). ATP-binding positions include Ile18, Arg19, Gly60, Lys63, Thr64, Thr65, 126-128, Arg169, Tyr179, and Arg216; that span reads EDF. Residue Thr64 participates in Mg(2+) binding. Residues 180-250 form a small ATPAse domain (RuvB-S) region; sequence NTGELKKVLN…ISDFGLNRLE (71 aa). The head domain (RuvB-H) stretch occupies residues 253–342; it reads RIGLDSNDYR…HQFNIFNENE (90 aa). Residues Arg289, Arg308, and Arg313 each coordinate DNA.

The protein belongs to the RuvB family. As to quaternary structure, homohexamer. Forms an RuvA(8)-RuvB(12)-Holliday junction (HJ) complex. HJ DNA is sandwiched between 2 RuvA tetramers; dsDNA enters through RuvA and exits via RuvB. An RuvB hexamer assembles on each DNA strand where it exits the tetramer. Each RuvB hexamer is contacted by two RuvA subunits (via domain III) on 2 adjacent RuvB subunits; this complex drives branch migration. In the full resolvosome a probable DNA-RuvA(4)-RuvB(12)-RuvC(2) complex forms which resolves the HJ.

The protein localises to the cytoplasm. It catalyses the reaction ATP + H2O = ADP + phosphate + H(+). The RuvA-RuvB-RuvC complex processes Holliday junction (HJ) DNA during genetic recombination and DNA repair, while the RuvA-RuvB complex plays an important role in the rescue of blocked DNA replication forks via replication fork reversal (RFR). RuvA specifically binds to HJ cruciform DNA, conferring on it an open structure. The RuvB hexamer acts as an ATP-dependent pump, pulling dsDNA into and through the RuvAB complex. RuvB forms 2 homohexamers on either side of HJ DNA bound by 1 or 2 RuvA tetramers; 4 subunits per hexamer contact DNA at a time. Coordinated motions by a converter formed by DNA-disengaged RuvB subunits stimulates ATP hydrolysis and nucleotide exchange. Immobilization of the converter enables RuvB to convert the ATP-contained energy into a lever motion, pulling 2 nucleotides of DNA out of the RuvA tetramer per ATP hydrolyzed, thus driving DNA branch migration. The RuvB motors rotate together with the DNA substrate, which together with the progressing nucleotide cycle form the mechanistic basis for DNA recombination by continuous HJ branch migration. Branch migration allows RuvC to scan DNA until it finds its consensus sequence, where it cleaves and resolves cruciform DNA. The sequence is that of Holliday junction branch migration complex subunit RuvB from Rickettsia conorii (strain ATCC VR-613 / Malish 7).